The sequence spans 143 residues: Putative pre-16S rRNA nuclease (143 aa).

Belongs to the YqgF nuclease family.

The protein localises to the cytoplasm. Its function is as follows. Could be a nuclease involved in processing of the 5'-end of pre-16S rRNA. The chain is Putative pre-16S rRNA nuclease from Lactococcus lactis subsp. cremoris (strain MG1363).